We begin with the raw amino-acid sequence, 49 residues long: Small, acid-soluble spore protein K (49 aa).

The segment at 1 to 49 (MRNKSRGFPNMNNNKFEGEPRAKDDFASKRPDGSTNTHPQERMRASGKR) is disordered. Composition is skewed to basic and acidic residues over residues 16–32 (FEGEPRAKDDFASKRPD) and 39–49 (PQERMRASGKR).

The protein belongs to the SspK family.

The protein localises to the spore core. This is Small, acid-soluble spore protein K from Bacillus licheniformis (strain ATCC 14580 / DSM 13 / JCM 2505 / CCUG 7422 / NBRC 12200 / NCIMB 9375 / NCTC 10341 / NRRL NRS-1264 / Gibson 46).